The primary structure comprises 68 residues: Protein transport protein Sec61 subunit gamma (68 aa).

Residues 1-32 (MDQVMQFVEPSRQFVKDSIRLVKRCTKPDRKE) lie on the Cytoplasmic side of the membrane. A helical membrane pass occupies residues 33–61 (FQKIAMATAIGFAIMGFIGFFVKLIHIPI). Residues 62–68 (NNIIVGS) lie on the Extracellular side of the membrane.

Belongs to the SecE/SEC61-gamma family. The SEC61 channel-forming translocon complex consists of channel-forming core components SEC61A1, SEC61B and SEC61G and different auxiliary components such as SEC62 and SEC63. The SEC61 channel associates with the multi-pass translocon (MPT) complex.

It is found in the endoplasmic reticulum membrane. In terms of biological role, component of SEC61 channel-forming translocon complex that mediates transport of signal peptide-containing precursor polypeptides across the endoplasmic reticulum (ER). Forms a ribosome receptor and a gated pore in the ER membrane, both functions required for cotranslational translocation of nascent polypeptides. The SEC61 channel is also involved in ER membrane insertion of transmembrane proteins: it mediates membrane insertion of the first few transmembrane segments of proteins, while insertion of subsequent transmembrane regions of multi-pass membrane proteins is mediated by the multi-pass translocon (MPT) complex. The protein is Protein transport protein Sec61 subunit gamma (sec61g) of Xenopus laevis (African clawed frog).